Reading from the N-terminus, the 442-residue chain is Putative mannan endo-1,6-alpha-mannosidase C1198.07c (442 aa).

Positions 1–19 (MRYLSFFFEFFFLFSFAFA) are cleaved as a signal peptide. The Lumenal segment spans residues 20-421 (FDFDVTSDDS…TPATKSDKGW (402 aa)). Residues Asn75, Asn124, Asn193, Asn229, Asn254, Asn257, and Asn356 are each glycosylated (N-linked (GlcNAc...) asparagine). The chain crosses the membrane as a helical span at residues 422 to 442 (AGFLTFAFSFVFLLFSIWLYF).

Belongs to the glycosyl hydrolase 76 family.

It is found in the endoplasmic reticulum membrane. The catalysed reaction is Random hydrolysis of (1-&gt;6)-alpha-D-mannosidic linkages in unbranched (1-&gt;6)-mannans.. This chain is Putative mannan endo-1,6-alpha-mannosidase C1198.07c, found in Schizosaccharomyces pombe (strain 972 / ATCC 24843) (Fission yeast).